A 70-amino-acid polypeptide reads, in one-letter code: Large ribosomal subunit protein bL31 (70 aa).

Zn(2+)-binding residues include C16, C18, C37, and C40.

It belongs to the bacterial ribosomal protein bL31 family. Type A subfamily. In terms of assembly, part of the 50S ribosomal subunit. Requires Zn(2+) as cofactor.

Its function is as follows. Binds the 23S rRNA. In Enterobacter sp. (strain 638), this protein is Large ribosomal subunit protein bL31.